We begin with the raw amino-acid sequence, 715 residues long: Protein DOA1 (715 aa).

WD repeat units follow at residues 11 to 40, 53 to 82, 97 to 125, 135 to 166, 177 to 206, 218 to 247, and 259 to 288; these read GHDQDVRDVVAVDDSKVASVSRDGTVRLWS, GQGFLNSVCYDSEKELLLFGGKDTMINGVP, GHQGNVCSLSFQDGVVISGSWDKTAKVWK, AHNASVWDAKVVSFSENKFLTASADKTIKLWQ, IHNDVVRHLAVVDDGHFISCSNDGLIKLVD, GHESFVYCIKLLPNGDIVSCGEDRTVRIWS, and LPAISIWSVDCMSNGDIIVGSSDNLVRIFS. Ser-332 is modified (phosphoserine). One can recognise a PFU domain in the interval 352-449; sequence AHQFSNSSWK…NGISLDQPND (98 aa). The tract at residues 434–440 is interaction with HSE1; sequence FILKNTN. The PUL domain occupies 465-715; it reads KVLPVKQYLI…RFKDIFDDLS (251 aa). ARM repeat units lie at residues 478 to 512, 513 to 543, 544 to 582, 583 to 635, 636 to 680, and 681 to 715; these read YNPDTIFNGIVKINSNEKTFDDEILAQIGGALHDI, DESWELLLSFANTIRSNWEIKTPAYDIVRLI, VKKLPYSSDIKDYIEEGLGNKNITLTMLTVRILVNCFNN, ENWG…LVTK, GNSD…LATV, and EPTLRQFANSVTWLANIKRSYGNVPRFKDIFDDLS.

It belongs to the WD repeat PLAP family. As to quaternary structure, forms a complex composed of CDC48, NPL4, UFD1, DOA1, SHP1 and deubiquitinase OTU1; within the complex interacts with CDC48. Interacts (via PUL domain) with CDC48 (via C-terminus); the interaction is direct. Forms a complex composed of CDC48, DOA1, deubiquitinase UBP3 and probably BRE5; within the complex interacts with CDC48 and UBP3. May form a complex composed of VPS27, HSE1 and DOA1. Interacts with HSE1 (via SH3 domain). Interacts (via WD repeats and PFU domain) with ubiquitin; the interaction is direct. Interacts with ubiquitinated FZO1 but not unmodified FZO1; the interaction recruits FZO1 to CDC48 and promotes FZO1 proteasomal degradation.

It localises to the nucleus. The protein resides in the cytoplasm. The protein localises to the mitochondrion outer membrane. Its subcellular location is the endosome membrane. Its function is as follows. Ubiquitin-binding protein involved in protein ubiquitination, sorting and degradation. Acts as a ubiquitinated substrate-recruiting adapter for chaperone ATPase CDC48 by binding mono- or polyubiquitin chains. Depending on the context, promotes or prevents proteasomal degradation of ubiquitinated proteins. Involved in the ubiquitin fusion degradation (UFD) pathway by promoting the degradation of ubiquitinated proteins. Involved in the mitochondria-associated degradation pathway (MAD) by promoting the degradation of several ubiquitinated membrane proteins. By competing with UFD2 to bind CDC48, prevents the multi-ubiquitination and subsequent degradation of UFD2-dependent substrates. Required for ribophagy, a process which relocalizes ribosomal particles into the vacuole for degradation in response to starvation. Involved in the ubiquitin-mediated sorting of membrane proteins into multivesicular bodies (MVBs). In addition, plays an essential role in maintaining cellular ubiquitin levels. May affect indirectly the degradation of ubiquitinylated proteins by regulating cellular ubiquitin levels. The chain is Protein DOA1 from Saccharomyces cerevisiae (strain ATCC 204508 / S288c) (Baker's yeast).